A 226-amino-acid chain; its full sequence is MTQRTSVALLSGGLDSATAAAMALEEGDRVIGLSFDYGQRHHRELEAAAAVASHLGLAEHHCLAVDLAAWGGSALTDDAVTIPTDGVQEGVIPPTYVPGRNTVFIAVGLSLAEARGAERLVLGVNAVDYSGYPDCRPDYLNVFQQLANLASKAGREGHGTELWAPLVEWSKTRIVEEAFRLNVPIQSTWSCYSGGTTPCGICDSCRIRDAALREAGRPDLCSNASA.

Residue 10–20 (LSGGLDSATAA) coordinates ATP. 4 residues coordinate Zn(2+): Cys-191, Cys-199, Cys-202, and Cys-205.

This sequence belongs to the QueC family. Zn(2+) serves as cofactor.

It catalyses the reaction 7-carboxy-7-deazaguanine + NH4(+) + ATP = 7-cyano-7-deazaguanine + ADP + phosphate + H2O + H(+). The protein operates within purine metabolism; 7-cyano-7-deazaguanine biosynthesis. Catalyzes the ATP-dependent conversion of 7-carboxy-7-deazaguanine (CDG) to 7-cyano-7-deazaguanine (preQ(0)). This Parasynechococcus marenigrum (strain WH8102) protein is 7-cyano-7-deazaguanine synthase.